The chain runs to 219 residues: MTDHRTRFLQLALDADALRFGEFTLKSGRLSPYFFNAGRFDSGAKTAQLAQCYADAIDAAGVEFDLLFGPAYKGIPLATALACAYAGRGRDLPLAFNRKEAKDHGEGGTLIGAPLQGRKVLIVDDVITAGTAIREALGIIRAAGGTPSGIVVALDRQEIASEQDRRSAAQAVAAEAGIPVIAVANLADLLAFAAGNADLVGFREPLLAYRGRYGTDTTG.

Lys26 is a 5-phospho-alpha-D-ribose 1-diphosphate binding site. Orotate is bound at residue 34–35 (FF). 5-phospho-alpha-D-ribose 1-diphosphate contacts are provided by residues 72–73 (YK), Arg98, Lys99, Lys102, His104, and 124–132 (DDVITAGTA). Thr128 and Arg156 together coordinate orotate.

It belongs to the purine/pyrimidine phosphoribosyltransferase family. PyrE subfamily. As to quaternary structure, homodimer. Mg(2+) serves as cofactor.

The catalysed reaction is orotidine 5'-phosphate + diphosphate = orotate + 5-phospho-alpha-D-ribose 1-diphosphate. It participates in pyrimidine metabolism; UMP biosynthesis via de novo pathway; UMP from orotate: step 1/2. Catalyzes the transfer of a ribosyl phosphate group from 5-phosphoribose 1-diphosphate to orotate, leading to the formation of orotidine monophosphate (OMP). The polypeptide is Orotate phosphoribosyltransferase (Xanthomonas campestris pv. campestris (strain 8004)).